The chain runs to 240 residues: Ribosomal RNA small subunit methyltransferase G (240 aa).

S-adenosyl-L-methionine contacts are provided by residues Gly-79, Phe-84, Ala-130–Glu-131, and Arg-149.

Belongs to the methyltransferase superfamily. RNA methyltransferase RsmG family.

The protein resides in the cytoplasm. In terms of biological role, specifically methylates the N7 position of a guanine in 16S rRNA. This chain is Ribosomal RNA small subunit methyltransferase G, found in Lactobacillus helveticus (strain DPC 4571).